We begin with the raw amino-acid sequence, 210 residues long: Large ribosomal subunit protein uL3 (210 aa).

It belongs to the universal ribosomal protein uL3 family. In terms of assembly, part of the 50S ribosomal subunit. Forms a cluster with proteins L14 and L19.

In terms of biological role, one of the primary rRNA binding proteins, it binds directly near the 3'-end of the 23S rRNA, where it nucleates assembly of the 50S subunit. This is Large ribosomal subunit protein uL3 from Solibacter usitatus (strain Ellin6076).